The primary structure comprises 470 residues: ADAM DEC1 (470 aa).

The signal sequence occupies residues 1–30 (MLRGISQLPAVATMSWVLLPVLWLIVQTQA). Positions 31 to 205 (IAIKQTPELT…QGPIRISRSL (175 aa)) are excised as a propeptide. N-linked (GlcNAc...) asparagine glycosylation occurs at Asn61. The disordered stretch occupies residues 173–200 (FTSNQEEQDPANHTCGVKSTDGKQGPIR). Asn184 is a glycosylation site (N-linked (GlcNAc...) (complex) asparagine). A Peptidase M12B domain is found at 218–412 (KYIDLYLVLD…QKPKCLLQAP (195 aa)). Asn237 is a glycosylation site (N-linked (GlcNAc...) asparagine). 2 disulfide bridges follow: Cys328-Cys407 and Cys369-Cys374. His352 serves as a coordination point for Zn(2+). The active site involves Glu353. Residues His356 and Asp362 each coordinate Zn(2+). The Disintegrin domain occupies 420-470 (TPVCGNHLLEVGEDCDCGSPKECTNLCCEALTCKLKPGTDCGGDAPNHTTE). Residue Asn466 is glycosylated (N-linked (GlcNAc...) asparagine).

Zn(2+) serves as cofactor. In terms of tissue distribution, expressed highly in the small intestine and appendix, moderately in lymph node, mucosal lining of the colon, thymus, spleen and very weakly in the bone marrow. Predominantly expressed in dendritic cells (DC) of the germinal center. Weakly expressed in monocyte and highly expressed in macrophage. Absent in immature DC.

The protein resides in the secreted. Functionally, may play an important role in the control of the immune response and during pregnancy. The chain is ADAM DEC1 (ADAMDEC1) from Homo sapiens (Human).